The primary structure comprises 110 residues: Heat shock protein Hsp-12.2 (110 aa).

In terms of domain architecture, sHSP spans 15–110; sequence DWPLQHNDGV…VLTITASKKA (96 aa).

Belongs to the small heat shock protein (HSP20) family.

The protein is Heat shock protein Hsp-12.2 (hsp-12.2) of Caenorhabditis elegans.